A 727-amino-acid polypeptide reads, in one-letter code: Non-structural protein 4 (727 aa).

2 disordered regions span residues 1 to 38 and 671 to 727; these read MNQS…PSEG and GNSM…KLSK. Residues 17–38 show a composition bias toward polar residues; it reads RTPSALSSNSETPGSMSSPSEG. Residues 712–727 are compositionally biased toward basic residues; that stretch reads SRRKARKARAASKLSK.

This Rice dwarf virus (isolate Fujian) (RDV) protein is Non-structural protein 4.